Reading from the N-terminus, the 210-residue chain is Small ribosomal subunit protein uS4 (210 aa).

The 63-residue stretch at Arg-99–Ala-161 folds into the S4 RNA-binding domain.

The protein belongs to the universal ribosomal protein uS4 family. As to quaternary structure, part of the 30S ribosomal subunit. Contacts protein S5. The interaction surface between S4 and S5 is involved in control of translational fidelity.

One of the primary rRNA binding proteins, it binds directly to 16S rRNA where it nucleates assembly of the body of the 30S subunit. Functionally, with S5 and S12 plays an important role in translational accuracy. The chain is Small ribosomal subunit protein uS4 from Solibacter usitatus (strain Ellin6076).